Here is a 177-residue protein sequence, read N- to C-terminus: Parathyroid hormone-related protein (177 aa).

A signal peptide spans Met-1–Gly-24. A propeptide spanning residues Arg-25–Leu-34 is cleaved from the precursor. The important for receptor binding stretch occupies residues Arg-57–His-68. The disordered stretch occupies residues Ala-74–His-177. Residues Ser-76 to Asn-90 show a composition bias toward polar residues. The Nuclear localization signal motif lies at Thr-108–Lys-129. The span at Asn-109 to Pro-118 shows a compositional bias: basic and acidic residues. Basic residues predominate over residues Pro-122 to Lys-132.

The protein belongs to the parathyroid hormone family. As to quaternary structure, PTHrP interacts with PTH1R (via N-terminal extracellular domain). There are several secretory forms, including osteostatin, arising from endoproteolytic cleavage of the initial translation product. Each of these secretory forms is believed to have one or more of its own receptors that mediates the normal paracrine, autocrine and endocrine actions.

The protein resides in the secreted. Its subcellular location is the cytoplasm. The protein localises to the nucleus. In terms of biological role, neuroendocrine peptide which is a critical regulator of cellular and organ growth, development, migration, differentiation and survival and of epithelial calcium ion transport. Acts by binding to its receptor, PTH1R, activating G protein-coupled receptor signaling. Regulates endochondral bone development and epithelial-mesenchymal interactions during the formation of the mammary glands and teeth. Required for skeletal homeostasis. Promotes mammary mesenchyme differentiation and bud outgrowth by modulating mesenchymal cell responsiveness to BMPs. Up-regulates BMPR1A expression in the mammary mesenchyme and this increases the sensitivity of these cells to BMPs and allows them to respond to BMP4 in a paracrine and/or autocrine fashion. BMP4 signaling in the mesenchyme, in turn, triggers epithelial outgrowth and augments MSX2 expression, which causes the mammary mesenchyme to inhibit hair follicle formation within the nipple sheath. Functionally, potent inhibitor of osteoclastic bone resorption. The sequence is that of Parathyroid hormone-related protein (PTHLH) from Canis lupus familiaris (Dog).